Reading from the N-terminus, the 491-residue chain is Protein nucleotidyltransferase YdiU (491 aa).

Glycine 88, glycine 90, arginine 91, lysine 111, aspartate 123, glycine 124, arginine 174, and arginine 181 together coordinate ATP. Aspartate 250 serves as the catalytic Proton acceptor. Residues asparagine 251 and aspartate 260 each contribute to the Mg(2+) site. Aspartate 260 serves as a coordination point for ATP.

This sequence belongs to the SELO family. Requires Mg(2+) as cofactor. The cofactor is Mn(2+).

It catalyses the reaction L-seryl-[protein] + ATP = 3-O-(5'-adenylyl)-L-seryl-[protein] + diphosphate. The catalysed reaction is L-threonyl-[protein] + ATP = 3-O-(5'-adenylyl)-L-threonyl-[protein] + diphosphate. The enzyme catalyses L-tyrosyl-[protein] + ATP = O-(5'-adenylyl)-L-tyrosyl-[protein] + diphosphate. It carries out the reaction L-histidyl-[protein] + UTP = N(tele)-(5'-uridylyl)-L-histidyl-[protein] + diphosphate. It catalyses the reaction L-seryl-[protein] + UTP = O-(5'-uridylyl)-L-seryl-[protein] + diphosphate. The catalysed reaction is L-tyrosyl-[protein] + UTP = O-(5'-uridylyl)-L-tyrosyl-[protein] + diphosphate. Functionally, nucleotidyltransferase involved in the post-translational modification of proteins. It can catalyze the addition of adenosine monophosphate (AMP) or uridine monophosphate (UMP) to a protein, resulting in modifications known as AMPylation and UMPylation. The protein is Protein nucleotidyltransferase YdiU of Bradyrhizobium sp. (strain BTAi1 / ATCC BAA-1182).